The chain runs to 141 residues: Small ribosomal subunit protein eS17z (141 aa).

The protein belongs to the eukaryotic ribosomal protein eS17 family.

This is Small ribosomal subunit protein eS17z (RPS17A) from Arabidopsis thaliana (Mouse-ear cress).